The sequence spans 426 residues: GTPase Obg (426 aa).

In terms of domain architecture, Obg spans M1 to I158. Disordered regions lie at residues G66 to V86 and G119 to G146. One can recognise an OBG-type G domain in the interval A159–E329. Residues G165–S172, F190–S194, D212–G215, N282–D285, and S310–L312 contribute to the GTP site. Mg(2+) is bound by residues S172 and T192. In terms of domain architecture, OCT spans R348–E426.

The protein belongs to the TRAFAC class OBG-HflX-like GTPase superfamily. OBG GTPase family. In terms of assembly, monomer. The cofactor is Mg(2+).

It is found in the cytoplasm. Functionally, an essential GTPase which binds GTP, GDP and possibly (p)ppGpp with moderate affinity, with high nucleotide exchange rates and a fairly low GTP hydrolysis rate. Plays a role in control of the cell cycle, stress response, ribosome biogenesis and in those bacteria that undergo differentiation, in morphogenesis control. This chain is GTPase Obg, found in Oceanobacillus iheyensis (strain DSM 14371 / CIP 107618 / JCM 11309 / KCTC 3954 / HTE831).